The sequence spans 123 residues: Large ribosomal subunit protein uL14 (123 aa).

It belongs to the universal ribosomal protein uL14 family. In terms of assembly, part of the 50S ribosomal subunit. Forms a cluster with proteins L3 and L19. In the 70S ribosome, L14 and L19 interact and together make contacts with the 16S rRNA in bridges B5 and B8.

In terms of biological role, binds to 23S rRNA. Forms part of two intersubunit bridges in the 70S ribosome. This is Large ribosomal subunit protein uL14 from Tropheryma whipplei (strain TW08/27) (Whipple's bacillus).